The sequence spans 256 residues: Hydroxyacylglutathione hydrolase (256 aa).

Positions 55, 57, 59, 60, 113, 130, and 168 each coordinate Zn(2+).

This sequence belongs to the metallo-beta-lactamase superfamily. Glyoxalase II family. As to quaternary structure, monomer. Zn(2+) serves as cofactor.

It catalyses the reaction an S-(2-hydroxyacyl)glutathione + H2O = a 2-hydroxy carboxylate + glutathione + H(+). It participates in secondary metabolite metabolism; methylglyoxal degradation; (R)-lactate from methylglyoxal: step 2/2. In terms of biological role, thiolesterase that catalyzes the hydrolysis of S-D-lactoyl-glutathione to form glutathione and D-lactic acid. The polypeptide is Hydroxyacylglutathione hydrolase (Alkalilimnicola ehrlichii (strain ATCC BAA-1101 / DSM 17681 / MLHE-1)).